Here is a 557-residue protein sequence, read N- to C-terminus: Formate--tetrahydrofolate ligase (557 aa).

67-74 (TPAGEGKT) is a binding site for ATP.

This sequence belongs to the formate--tetrahydrofolate ligase family.

The catalysed reaction is (6S)-5,6,7,8-tetrahydrofolate + formate + ATP = (6R)-10-formyltetrahydrofolate + ADP + phosphate. It participates in one-carbon metabolism; tetrahydrofolate interconversion. This chain is Formate--tetrahydrofolate ligase, found in Cereibacter sphaeroides (strain ATCC 17029 / ATH 2.4.9) (Rhodobacter sphaeroides).